The sequence spans 181 residues: Adenylate kinase (181 aa).

Position 10–15 (10–15 (GAGKGT)) interacts with ATP. The interval 30–59 (STGDLFRDNITNETELGVEAKRYLDAGDLV) is NMP. AMP-binding positions include Thr-31, Arg-36, 57-59 (DLV), 85-88 (GYPR), and Gln-92. The LID stretch occupies residues 126 to 132 (GRGRADD). Arg-127 lines the ATP pocket. The AMP site is built by Arg-129 and Arg-140. Gly-166 serves as a coordination point for ATP.

Belongs to the adenylate kinase family. As to quaternary structure, monomer.

The protein localises to the cytoplasm. The enzyme catalyses AMP + ATP = 2 ADP. Its pathway is purine metabolism; AMP biosynthesis via salvage pathway; AMP from ADP: step 1/1. Catalyzes the reversible transfer of the terminal phosphate group between ATP and AMP. Plays an important role in cellular energy homeostasis and in adenine nucleotide metabolism. This Mycobacterium sp. (strain MCS) protein is Adenylate kinase.